Reading from the N-terminus, the 234-residue chain is Purine nucleoside phosphorylase DeoD-type (234 aa).

A purine D-ribonucleoside is bound at residue histidine 4. Phosphate contacts are provided by residues glycine 20, arginine 24, arginine 43, and 87 to 90 (RIGS). A purine D-ribonucleoside is bound by residues 179–181 (DME) and 203–204 (SD). The active-site Proton donor is aspartate 204.

It belongs to the PNP/UDP phosphorylase family. Homohexamer; trimer of homodimers.

The enzyme catalyses a purine D-ribonucleoside + phosphate = a purine nucleobase + alpha-D-ribose 1-phosphate. The catalysed reaction is a purine 2'-deoxy-D-ribonucleoside + phosphate = a purine nucleobase + 2-deoxy-alpha-D-ribose 1-phosphate. Functionally, catalyzes the reversible phosphorolytic breakdown of the N-glycosidic bond in the beta-(deoxy)ribonucleoside molecules, with the formation of the corresponding free purine bases and pentose-1-phosphate. The polypeptide is Purine nucleoside phosphorylase DeoD-type (Shewanella oneidensis (strain ATCC 700550 / JCM 31522 / CIP 106686 / LMG 19005 / NCIMB 14063 / MR-1)).